A 227-amino-acid polypeptide reads, in one-letter code: Lipoprotein-releasing system ATP-binding protein LolD (227 aa).

Residues 6–227 enclose the ABC transporter domain; sequence LVLDDIQKSY…RLDEGVLVSA (222 aa). Residue 43–50 coordinates ATP; that stretch reads APSGAGKS.

Belongs to the ABC transporter superfamily. Lipoprotein translocase (TC 3.A.1.125) family. As to quaternary structure, the complex is composed of two ATP-binding proteins (LolD) and two transmembrane proteins (LolC and LolE).

It localises to the cell inner membrane. In terms of biological role, part of the ABC transporter complex LolCDE involved in the translocation of mature outer membrane-directed lipoproteins, from the inner membrane to the periplasmic chaperone, LolA. Responsible for the formation of the LolA-lipoprotein complex in an ATP-dependent manner. The sequence is that of Lipoprotein-releasing system ATP-binding protein LolD from Jannaschia sp. (strain CCS1).